The primary structure comprises 928 residues: TBC1 domain family member 2A (928 aa).

Position 1 is an N-acetylmethionine (methionine 1). Positions 1-19 (MEGAGENAPESSSSAPGSE) are enriched in low complexity. Positions 1 to 39 (MEGAGENAPESSSSAPGSEESARDPQVPPPEEESGDCAR) are disordered. Residues 1-169 (MEGAGENAPE…AGNGPVLHLE (169 aa)) form an interaction with CADH1 region. The region spanning 45–142 (PKKLCGYLSK…WLQQLQMKRW (98 aa)) is the PH domain. Residues 225–275 (NKQAQGTGHEPPGEDSPQSGEPQREEQPLASDASTPGREPEDSPKPAPKPS) are disordered. The interaction with RAC1 stretch occupies residues 295-433 (SEGITRNRTA…KVTQDFTHPP (139 aa)). Residues 298–416 (ITRNRTAQEK…LMDKNHAKQQ (119 aa)) adopt a coiled-coil conformation. Serine 436 is modified (phosphoserine). The Rab-GAP TBC domain maps to 625–817 (GVPREHRPRV…RVWDAFLYEG (193 aa)). Residues 875–913 (MKQLRQLRMVHRERLEAELRELEQLKAEYLERRASRRRA) adopt a coiled-coil conformation. 2 positions are modified to phosphoserine: serine 915 and serine 920.

In terms of assembly, interacts with activated RAC1 and CDH1. In terms of tissue distribution, expressed in a broad range of tissues, especially in kidney, liver, lung and placenta. Also expressed in keratinocytes and epithelia-containing organs. Isoform 2 is differentially expressed in prostate normal and cancer cells (at protein level).

It is found in the cytoplasm. The protein resides in the cytoplasmic vesicle. Its subcellular location is the cell junction. Functionally, acts as a GTPase-activating protein for RAB7A. Signal effector acting as a linker between RAC1 and RAB7A, leading to RAB7A inactivation and subsequent inhibition of cadherin degradation and reduced cell-cell adhesion. In Homo sapiens (Human), this protein is TBC1 domain family member 2A (TBC1D2).